The following is a 319-amino-acid chain: Ferrochelatase (319 aa).

2 residues coordinate Fe cation: H194 and E275.

It belongs to the ferrochelatase family.

The protein resides in the cytoplasm. It catalyses the reaction heme b + 2 H(+) = protoporphyrin IX + Fe(2+). It functions in the pathway porphyrin-containing compound metabolism; protoheme biosynthesis; protoheme from protoporphyrin-IX: step 1/1. Catalyzes the ferrous insertion into protoporphyrin IX. The chain is Ferrochelatase from Vibrio vulnificus (strain YJ016).